Here is a 373-residue protein sequence, read N- to C-terminus: GTPase Obg (373 aa).

Residues 1-159 (MKFIDEARIE…RMVRLELKVL (159 aa)) enclose the Obg domain. Positions 128-147 (LHFKSSTNRAPRQKTDGKPG) are disordered. The region spanning 160 to 334 (ADVGLLGMPN…LCYAVFDHIS (175 aa)) is the OBG-type G domain. GTP contacts are provided by residues 166–173 (GMPNAGKS), 191–195 (FTTLA), 213–216 (DIPG), 284–287 (NKLD), and 315–317 (SAL). Residues S173 and T193 each contribute to the Mg(2+) site. Residues 354–373 (FREKPQAPAAADDAGTDPQV) are disordered. Over residues 359–373 (QAPAAADDAGTDPQV) the composition is skewed to low complexity.

This sequence belongs to the TRAFAC class OBG-HflX-like GTPase superfamily. OBG GTPase family. Monomer. The cofactor is Mg(2+).

It localises to the cytoplasm. Functionally, an essential GTPase which binds GTP, GDP and possibly (p)ppGpp with moderate affinity, with high nucleotide exchange rates and a fairly low GTP hydrolysis rate. Plays a role in control of the cell cycle, stress response, ribosome biogenesis and in those bacteria that undergo differentiation, in morphogenesis control. The sequence is that of GTPase Obg from Paraburkholderia phytofirmans (strain DSM 17436 / LMG 22146 / PsJN) (Burkholderia phytofirmans).